Here is a 216-residue protein sequence, read N- to C-terminus: MADLSTLMPALVLGVCALAGYLLGSVPFGLVLVRLAGLGDVRGIGSGNIGATNVLRTGRKDLALATLVLDSGKGAIAALVASALASRIAGFEDAVLAGLLAGGMAVVGHNFPIWLGFKGGKGVATTLGTLLATAWPVGLAACATWLVVAALFRYSSLAALVCLALAPAYALVLATPAHAAVFALLALLAWIRHRANIARLLKGEESRIGAKKKAAP.

The next 5 membrane-spanning stretches (helical) occupy residues 11-31 (LVLGVCALAGYLLGSVPFGLV), 62-82 (LALATLVLDSGKGAIAALVAS), 95-115 (VLAGLLAGGMAVVGHNFPIWL), 132-152 (ATAWPVGLAACATWLVVAALF), and 171-191 (LVLATPAHAAVFALLALLAWI).

This sequence belongs to the PlsY family. Probably interacts with PlsX.

Its subcellular location is the cell inner membrane. It carries out the reaction an acyl phosphate + sn-glycerol 3-phosphate = a 1-acyl-sn-glycero-3-phosphate + phosphate. It participates in lipid metabolism; phospholipid metabolism. In terms of biological role, catalyzes the transfer of an acyl group from acyl-phosphate (acyl-PO(4)) to glycerol-3-phosphate (G3P) to form lysophosphatidic acid (LPA). This enzyme utilizes acyl-phosphate as fatty acyl donor, but not acyl-CoA or acyl-ACP. The protein is Glycerol-3-phosphate acyltransferase of Rhodospirillum rubrum (strain ATCC 11170 / ATH 1.1.1 / DSM 467 / LMG 4362 / NCIMB 8255 / S1).